Here is a 318-residue protein sequence, read N- to C-terminus: Homoserine kinase (318 aa).

P97–C107 serves as a coordination point for ATP.

Belongs to the GHMP kinase family. Homoserine kinase subfamily.

It is found in the cytoplasm. The enzyme catalyses L-homoserine + ATP = O-phospho-L-homoserine + ADP + H(+). Its pathway is amino-acid biosynthesis; L-threonine biosynthesis; L-threonine from L-aspartate: step 4/5. Catalyzes the ATP-dependent phosphorylation of L-homoserine to L-homoserine phosphate. The polypeptide is Homoserine kinase (Aliivibrio salmonicida (strain LFI1238) (Vibrio salmonicida (strain LFI1238))).